The following is a 388-amino-acid chain: Flavin oxidoreductase hxnT (388 aa).

It belongs to the NADH:flavin oxidoreductase/NADH oxidase family. Requires FMN as cofactor.

In terms of biological role, flavin oxidoreductase, part of the hnx cluster involved in the purine degradation. The nicotinate hydroxylase hnxS accepts nicotinate as a substrate and catalyzes the first step of nicotinate catabolism. The major facilitator-type transporters hxnP and hxnZ are probably involved in the uptake of nicotinate-derived metabolites, and the oxidoreductases hxnT and hxnY in the further metabolism of 6-OH nicotinic acid. This is Flavin oxidoreductase hxnT from Emericella nidulans (strain FGSC A4 / ATCC 38163 / CBS 112.46 / NRRL 194 / M139) (Aspergillus nidulans).